The sequence spans 188 residues: Selenoprotein S B (188 aa).

Residues 29 to 49 (EALSNYGWYILLGCIVIYFLI) traverse the membrane as a helical segment. The segment covering 116–125 (TWDRMQEGKS) has biased composition (basic and acidic residues). Residues 116-188 (TWDRMQEGKS…RGPSSGGSUG (73 aa)) form a disordered region. Low complexity predominate over residues 136–147 (ASPRTSTSSSAP). Residue Sec-187 is a non-standard amino acid, selenocysteine.

It belongs to the selenoprotein S family.

The protein resides in the endoplasmic reticulum membrane. The protein localises to the cytoplasm. In terms of biological role, involved in the degradation process of misfolded endoplasmic reticulum (ER) luminal proteins. Participates in the transfer of misfolded proteins from the ER to the cytosol, where they are destroyed by the proteasome in a ubiquitin-dependent manner. This is Selenoprotein S B (vimp-b) from Xenopus laevis (African clawed frog).